We begin with the raw amino-acid sequence, 461 residues long: Putative transcription initiation factor IIB-like protein (461 aa).

A disordered region spans residues 113-142; the sequence is SESLENIQSENSENNDNFTDNNTKKSPTKS. The segment covering 121-137 has biased composition (low complexity); sequence SENSENNDNFTDNNTKK. The TFIIB-type zinc finger occupies 141 to 173; the sequence is KSRICSGCGSKGTLLEDQSSSVLVCSECGMIND. Zn(2+) is bound by residues Cys-145, Cys-165, and Cys-168. 2 tandem repeats follow at residues 246–327 and 360–430.

It belongs to the TFIIB family.

The protein is Putative transcription initiation factor IIB-like protein of Acanthamoeba polyphaga mimivirus (APMV).